A 154-amino-acid polypeptide reads, in one-letter code: MFGADKGTADRLDGRKLHIGIVQARFNEGITEALAAACREELLALGVQEKNIRHVRVPGALEVPLALQALAEQDEYDALIALGCIIRGETYHFELVANESGAGVTRVSLDTQTPIANAILTTENLEQAVARQTEKGRDAARVAVEMANLLEELS.

Residues phenylalanine 26, 60 to 62, and 84 to 86 each bind 5-amino-6-(D-ribitylamino)uracil; these read ALE and CII. (2S)-2-hydroxy-3-oxobutyl phosphate is bound at residue 89 to 90; that stretch reads ET. The active-site Proton donor is histidine 92. Asparagine 117 provides a ligand contact to 5-amino-6-(D-ribitylamino)uracil. Arginine 131 is a (2S)-2-hydroxy-3-oxobutyl phosphate binding site.

This sequence belongs to the DMRL synthase family.

The catalysed reaction is (2S)-2-hydroxy-3-oxobutyl phosphate + 5-amino-6-(D-ribitylamino)uracil = 6,7-dimethyl-8-(1-D-ribityl)lumazine + phosphate + 2 H2O + H(+). Its pathway is cofactor biosynthesis; riboflavin biosynthesis; riboflavin from 2-hydroxy-3-oxobutyl phosphate and 5-amino-6-(D-ribitylamino)uracil: step 1/2. Its function is as follows. Catalyzes the formation of 6,7-dimethyl-8-ribityllumazine by condensation of 5-amino-6-(D-ribitylamino)uracil with 3,4-dihydroxy-2-butanone 4-phosphate. This is the penultimate step in the biosynthesis of riboflavin. The polypeptide is 6,7-dimethyl-8-ribityllumazine synthase (Paracidovorax citrulli (strain AAC00-1) (Acidovorax citrulli)).